Here is a 311-residue protein sequence, read N- to C-terminus: Mediator of RNA polymerase II transcription subunit 27 (311 aa).

This sequence belongs to the Mediator complex subunit 27 family. Component of the Mediator complex.

Its subcellular location is the nucleus. Its function is as follows. Component of the Mediator complex, a coactivator involved in the regulated transcription of nearly all RNA polymerase II-dependent genes. Mediator functions as a bridge to convey information from gene-specific regulatory proteins to the basal RNA polymerase II transcription machinery. Mediator is recruited to promoters by direct interactions with regulatory proteins and serves as a scaffold for the assembly of a functional preinitiation complex with RNA polymerase II and the general transcription factors. Required for the development of dopaminergic amacrine cells in the retina. May also negatively regulate the development of rod photoreceptor cells. The polypeptide is Mediator of RNA polymerase II transcription subunit 27 (med27) (Danio rerio (Zebrafish)).